The following is a 61-amino-acid chain: MAKKALVEKAARKPKYAVRGYTRCQRCGRPRSVYRVFGLCRVCLRQMAHRGELPGVTKSSW.

Zn(2+) is bound by residues C24, C27, C40, and C43.

Belongs to the universal ribosomal protein uS14 family. Zinc-binding uS14 subfamily. In terms of assembly, part of the 30S ribosomal subunit. Contacts proteins S3 and S10. Zn(2+) serves as cofactor.

Functionally, binds 16S rRNA, required for the assembly of 30S particles and may also be responsible for determining the conformation of the 16S rRNA at the A site. The sequence is that of Small ribosomal subunit protein uS14 from Parafrankia sp. (strain EAN1pec).